We begin with the raw amino-acid sequence, 318 residues long: Olfactory receptor 52D1 (318 aa).

At 1-28 (MSDSNLSDNHLPDTFFLTGIPGLEAAHF) the chain is on the extracellular side. An N-linked (GlcNAc...) asparagine glycan is attached at N5. A helical transmembrane segment spans residues 29-49 (WIAIPFCAMYLVALVGNAALI). The Cytoplasmic segment spans residues 50 to 57 (LVIAMDNA). The chain crosses the membrane as a helical span at residues 58-78 (LHAPMYLFLCLLSLTDLALSS). Residues 79-102 (TTVPKMLAILWLHAGEISFGGCLA) lie on the Extracellular side of the membrane. A disulfide bridge connects residues C100 and C192. A helical transmembrane segment spans residues 103–123 (QMFCVHSIYALESSILLAMAF). The Cytoplasmic segment spans residues 124-142 (DRYVAICNPLRYTTILNHA). Residues 143–163 (VIGRIGFVGLFRSVAIVSPFI) traverse the membrane as a helical segment. Over 164–199 (FLLRRLPYCGHRVMTHTYCEHMGIARLACANITVNI) the chain is Extracellular. A helical transmembrane segment spans residues 200–220 (VYGLTVALLAMGLDSILIAIS). Residues 221–240 (YGFILHAVFHLPSHDAQHKA) lie on the Cytoplasmic side of the membrane. Residues 241-261 (LSTCGSHIGIILVFYIPAFFS) form a helical membrane-spanning segment. Residues 262-277 (FLTHRFGHHEVPKHVH) lie on the Extracellular side of the membrane. A helical transmembrane segment spans residues 278–298 (IFLANLYVLVPPVLNPILYGA). At 299–318 (RTKEIRSRLLKLLHLGKTSI) the chain is on the cytoplasmic side.

The protein belongs to the G-protein coupled receptor 1 family.

It localises to the cell membrane. Functionally, odorant receptor. This Homo sapiens (Human) protein is Olfactory receptor 52D1 (OR52D1).